Consider the following 123-residue polypeptide: NADH-quinone oxidoreductase subunit A (123 aa).

The next 3 helical transmembrane spans lie at 11–31 (FPVL…VSIG), 67–87 (LVAI…PWGV), and 92–112 (IGWP…LGFA).

Belongs to the complex I subunit 3 family. As to quaternary structure, NDH-1 is composed of 14 different subunits. Subunits NuoA, H, J, K, L, M, N constitute the membrane sector of the complex.

Its subcellular location is the cell inner membrane. The catalysed reaction is a quinone + NADH + 5 H(+)(in) = a quinol + NAD(+) + 4 H(+)(out). In terms of biological role, NDH-1 shuttles electrons from NADH, via FMN and iron-sulfur (Fe-S) centers, to quinones in the respiratory chain. The immediate electron acceptor for the enzyme in this species is believed to be ubiquinone. Couples the redox reaction to proton translocation (for every two electrons transferred, four hydrogen ions are translocated across the cytoplasmic membrane), and thus conserves the redox energy in a proton gradient. This chain is NADH-quinone oxidoreductase subunit A, found in Paraburkholderia phymatum (strain DSM 17167 / CIP 108236 / LMG 21445 / STM815) (Burkholderia phymatum).